Reading from the N-terminus, the 339-residue chain is Biotin synthase (339 aa).

One can recognise a Radical SAM core domain in the interval 55–282 (NAVQLSTLLS…KAVVRLSAGR (228 aa)). [4Fe-4S] cluster-binding residues include Cys70, Cys74, and Cys77. Residues Cys114, Cys145, Cys205, and Arg277 each coordinate [2Fe-2S] cluster.

The protein belongs to the radical SAM superfamily. Biotin synthase family. As to quaternary structure, homodimer. [4Fe-4S] cluster serves as cofactor. [2Fe-2S] cluster is required as a cofactor.

The catalysed reaction is (4R,5S)-dethiobiotin + (sulfur carrier)-SH + 2 reduced [2Fe-2S]-[ferredoxin] + 2 S-adenosyl-L-methionine = (sulfur carrier)-H + biotin + 2 5'-deoxyadenosine + 2 L-methionine + 2 oxidized [2Fe-2S]-[ferredoxin]. Its pathway is cofactor biosynthesis; biotin biosynthesis; biotin from 7,8-diaminononanoate: step 2/2. Its function is as follows. Catalyzes the conversion of dethiobiotin (DTB) to biotin by the insertion of a sulfur atom into dethiobiotin via a radical-based mechanism. This chain is Biotin synthase, found in Burkholderia ambifaria (strain ATCC BAA-244 / DSM 16087 / CCUG 44356 / LMG 19182 / AMMD) (Burkholderia cepacia (strain AMMD)).